The chain runs to 210 residues: Guanylate kinase (210 aa).

In terms of domain architecture, Guanylate kinase-like spans 6-184; sequence GTLYIISAPS…ALQDLKCIIQ (179 aa). ATP is bound at residue 13–20; it reads APSGAGKT.

It belongs to the guanylate kinase family.

Its subcellular location is the cytoplasm. It catalyses the reaction GMP + ATP = GDP + ADP. Its function is as follows. Essential for recycling GMP and indirectly, cGMP. This Nitrosospira multiformis (strain ATCC 25196 / NCIMB 11849 / C 71) protein is Guanylate kinase.